Consider the following 480-residue polypeptide: MSPQTETKAFVGFKAGVKDYKLNYYTPQYQPLDTDILAAFRVTPQPGVPSEEAGAAVAAESSTGTWTTVWTDGLTSLDRYKGRCYHIDPVPGEDNQYICYVAYPLDLFEEGSVTNMFTSIVGNVFGFKALRALRLEDLRIPVAYIKTFQGPPHGIQVERDKLNKYGRAILGCTIKPKLGLSAKNYGRAVYECLRGGLDFTKDDENVNSQPFMRWRDRFLFCAEALYKAQAETGEIKGHYLNATAGTCEEMIKRAVFARELGAPIVMHDYLTGGFTANTSLAHYCRDNGLLLHIHRAMHAVIDRQKNHGMHFRVLAKALRLSGGDHIHAGTVVGKLEGERDITLGFVDLLRDDYIEIDDDRGIYFTQPWVSTPGVLPVASGGIHVWHMPALTEIFGDDSVLQFGGGTLGHPWGNAPGAVANRVALEACVQARNEGRDLAREGATIIREAAKWSPELAAACEVWKEIKFEFPAVDTLDKKKG.

Positions 1–2 (MS) are excised as a propeptide. Pro-3 carries the post-translational modification N-acetylproline. Lys-14 is modified (N6,N6,N6-trimethyllysine). Substrate-binding residues include Asn-123 and Thr-173. Lys-175 (proton acceptor) is an active-site residue. Lys-177 lines the substrate pocket. Residues Lys-201, Asp-203, and Glu-204 each coordinate Mg(2+). Lys-201 is subject to N6-carboxylysine. The active-site Proton acceptor is His-294. Arg-295, His-327, and Ser-379 together coordinate substrate.

The protein belongs to the RuBisCO large chain family. Type I subfamily. Heterohexadecamer of 8 large chains and 8 small chains; disulfide-linked. The disulfide link is formed within the large subunit homodimers. Mg(2+) serves as cofactor. Post-translationally, the disulfide bond which can form in the large chain dimeric partners within the hexadecamer appears to be associated with oxidative stress and protein turnover.

It is found in the plastid. It localises to the chloroplast. The catalysed reaction is 2 (2R)-3-phosphoglycerate + 2 H(+) = D-ribulose 1,5-bisphosphate + CO2 + H2O. It carries out the reaction D-ribulose 1,5-bisphosphate + O2 = 2-phosphoglycolate + (2R)-3-phosphoglycerate + 2 H(+). In terms of biological role, ruBisCO catalyzes two reactions: the carboxylation of D-ribulose 1,5-bisphosphate, the primary event in carbon dioxide fixation, as well as the oxidative fragmentation of the pentose substrate in the photorespiration process. Both reactions occur simultaneously and in competition at the same active site. The protein is Ribulose bisphosphate carboxylase large chain of Basella alba (Malabar spinach).